The chain runs to 253 residues: 5'-nucleotidase SurE 2 (253 aa).

Asp-8, Asp-9, Ser-39, and Asn-92 together coordinate a divalent metal cation.

This sequence belongs to the SurE nucleotidase family. A divalent metal cation is required as a cofactor.

The protein resides in the cytoplasm. The catalysed reaction is a ribonucleoside 5'-phosphate + H2O = a ribonucleoside + phosphate. Functionally, nucleotidase that shows phosphatase activity on nucleoside 5'-monophosphates. The protein is 5'-nucleotidase SurE 2 of Burkholderia lata (strain ATCC 17760 / DSM 23089 / LMG 22485 / NCIMB 9086 / R18194 / 383).